The sequence spans 199 residues: Protein GrpE (199 aa).

A compositionally biased stretch (polar residues) spans 1–17; that stretch reads MSDSDNNTKSQQNNPTQ. The segment at 1–36 is disordered; that stretch reads MSDSDNNTKSQQNNPTQTDEKSGEEIQSNQKPQRKF.

Belongs to the GrpE family. Homodimer.

The protein resides in the cytoplasm. Participates actively in the response to hyperosmotic and heat shock by preventing the aggregation of stress-denatured proteins, in association with DnaK and GrpE. It is the nucleotide exchange factor for DnaK and may function as a thermosensor. Unfolded proteins bind initially to DnaJ; upon interaction with the DnaJ-bound protein, DnaK hydrolyzes its bound ATP, resulting in the formation of a stable complex. GrpE releases ADP from DnaK; ATP binding to DnaK triggers the release of the substrate protein, thus completing the reaction cycle. Several rounds of ATP-dependent interactions between DnaJ, DnaK and GrpE are required for fully efficient folding. This chain is Protein GrpE, found in Ehrlichia canis (strain Jake).